Consider the following 385-residue polypeptide: Torsin-3A (385 aa).

The N-terminal stretch at M1 to G21 is a signal peptide. N-linked (GlcNAc...) asparagine glycosylation is present at N110. Residue G155–N162 participates in ATP binding.

The protein belongs to the ClpA/ClpB family. Torsin subfamily. In terms of assembly, interacts with TOR1AIP1. Post-translationally, N-glycosylated.

It is found in the cytoplasm. The protein localises to the endoplasmic reticulum lumen. The polypeptide is Torsin-3A (Tor3a) (Mus musculus (Mouse)).